A 435-amino-acid polypeptide reads, in one-letter code: MGKQEVRTRSGERVAIVAGLRTPFARQSTEFGQVPAVDLGKMVVQEMMARTAIDPKLIEQVVFGQVVQMPEAPNIAREIVLGTGMSINTDAYSVTRACATSFQAAVNVAESIMAGSIDIGIAGGADSSSVLPIGVSKKLAASLLALSKTKTVGQKLKLLSNLSFKDLMPVPPAVAEYSTGLSMGQTAEQMAKSYAISRAEQDALAHRSHTLAAQAWAEGKIRDEVMTAFPEPYKKWLDMDNNIRMDSKLESYAKLRPAFDRQYGSVTAANSTPLTDGAAAIMLMREGKAKELGLEIMGYIRSYAFAAIGVEKDMLMGPSYATPIALDRAGITLNDLTLIDMHEAFAAQTLANLKMFASDKFAQEQLGRAQAIGEVDMSKFNVLGGSLAYGHPFAATGARMITQTLRELKRRGGGLALNTACAAGGLGAAMILEVE.

Catalysis depends on cysteine 98, which acts as the Acyl-thioester intermediate. Residues histidine 391 and cysteine 421 each act as proton acceptor in the active site.

Belongs to the thiolase-like superfamily. Thiolase family. Heterotetramer of two alpha chains (FadJ) and two beta chains (FadI).

Its subcellular location is the cytoplasm. It catalyses the reaction an acyl-CoA + acetyl-CoA = a 3-oxoacyl-CoA + CoA. Its pathway is lipid metabolism; fatty acid beta-oxidation. Functionally, catalyzes the final step of fatty acid oxidation in which acetyl-CoA is released and the CoA ester of a fatty acid two carbons shorter is formed. This is 3-ketoacyl-CoA thiolase from Vibrio cholerae serotype O1 (strain ATCC 39315 / El Tor Inaba N16961).